The primary structure comprises 141 residues: Large ribosomal subunit protein uL11 (141 aa).

The protein belongs to the universal ribosomal protein uL11 family. In terms of assembly, part of the ribosomal stalk of the 50S ribosomal subunit. Interacts with L10 and the large rRNA to form the base of the stalk. L10 forms an elongated spine to which L12 dimers bind in a sequential fashion forming a multimeric L10(L12)X complex. Post-translationally, one or more lysine residues are methylated.

Functionally, forms part of the ribosomal stalk which helps the ribosome interact with GTP-bound translation factors. The chain is Large ribosomal subunit protein uL11 from Pseudothermotoga lettingae (strain ATCC BAA-301 / DSM 14385 / NBRC 107922 / TMO) (Thermotoga lettingae).